Reading from the N-terminus, the 23-residue chain is U22-ctenitoxin-Co1a (23 aa).

In terms of tissue distribution, expressed by the venom gland.

The protein localises to the secreted. The chain is U22-ctenitoxin-Co1a from Ctenus ornatus (Brazilian spider).